A 127-amino-acid polypeptide reads, in one-letter code: Interacting with cytoskeleton protein 1 (127 aa).

It localises to the vacuole membrane. In terms of biological role, required for viability of cells lacking mtDNA. The sequence is that of Interacting with cytoskeleton protein 1 (ICY1) from Saccharomyces cerevisiae (strain ATCC 204508 / S288c) (Baker's yeast).